The sequence spans 396 residues: tRNA (guanine-N(7)-)-methyltransferase (396 aa).

Positions 125, 150, and 177 each coordinate S-adenosyl-L-methionine. Substrate is bound by residues Lys203 and Asp233.

It belongs to the class I-like SAM-binding methyltransferase superfamily. TrmB family.

It catalyses the reaction guanosine(46) in tRNA + S-adenosyl-L-methionine = N(7)-methylguanosine(46) in tRNA + S-adenosyl-L-homocysteine. Its pathway is tRNA modification; N(7)-methylguanine-tRNA biosynthesis. Catalyzes the formation of N(7)-methylguanine at position 46 (m7G46) in tRNA. The chain is tRNA (guanine-N(7)-)-methyltransferase from Helicobacter hepaticus (strain ATCC 51449 / 3B1).